Consider the following 85-residue polypeptide: NAD(P)H-quinone oxidoreductase subunit O (85 aa).

It belongs to the complex I NdhO subunit family. As to quaternary structure, NDH-1 can be composed of about 15 different subunits; different subcomplexes with different compositions have been identified which probably have different functions.

It is found in the cellular thylakoid membrane. It carries out the reaction a plastoquinone + NADH + (n+1) H(+)(in) = a plastoquinol + NAD(+) + n H(+)(out). The enzyme catalyses a plastoquinone + NADPH + (n+1) H(+)(in) = a plastoquinol + NADP(+) + n H(+)(out). In terms of biological role, NDH-1 shuttles electrons from an unknown electron donor, via FMN and iron-sulfur (Fe-S) centers, to quinones in the respiratory and/or the photosynthetic chain. The immediate electron acceptor for the enzyme in this species is believed to be plastoquinone. Couples the redox reaction to proton translocation, and thus conserves the redox energy in a proton gradient. Cyanobacterial NDH-1 also plays a role in inorganic carbon-concentration. This Synechococcus sp. (strain WH7803) protein is NAD(P)H-quinone oxidoreductase subunit O.